The primary structure comprises 202 residues: NADH:(hydroxy)cinnamate reductase subunit CrdA (202 aa).

This sequence belongs to the NADH-dependent flavin reductase family. NADH:(hydroxy)cinnamate reductase Crd is a heterodimer composed of CrdA and CrdB subunits, encoded by adjacent genes. The cofactor is FMN.

Component of the NADH:(hydroxy)cinnamate reductase. CrdA is probably reduced by NADH and then transfers the electrons to the catalytic center of CrdB. Is likely involved in protecting V.ruber from (hydroxy)cinnamate poisoning. This is NADH:(hydroxy)cinnamate reductase subunit CrdA from Vibrio ruber (strain DSM 16370 / JCM 11486 / BCRC 17186 / CECT 7878 / LMG 23124 / VR1).